Here is a 383-residue protein sequence, read N- to C-terminus: MKKHINIKFGELFLKGKNKKEFIKALFKNVNKALSDFEFKLLDKHSMFTLEYCSEDENEIIHILKMIPGIHHFFLCLEAKTDIKEIAKVANGFDKKYKTFKIEVKRRYKEFLDQTEIKKEVATYILKNNEIKVDVHNPELTINIEIYDENKSYVWFDKILGVGGLPIGVNGRCLSLLSGGIDSPVASFLLQKRGQQVDYLTFITDDVTEITLNKLKSLIKQITLNYKIYKPRFFIVDFTKVQHELIHMSNEKYRITLMRRSFYRIAQQLAIKYKMNSLICGDSLGQVASQTIESINTISQVCDKMEIFRPLLTFDKVEIIEIAKQIGTYEISISEHEDVCSMFAPKHPITKPKLSIALALENELELLKSLEDRAVANVQIIKE.

The THUMP domain maps to 58-158 (NEIIHILKMI…ENKSYVWFDK (101 aa)). Residues 176–177 (LL), 201–202 (TF), R259, G281, and Q290 each bind ATP.

The protein belongs to the ThiI family.

Its subcellular location is the cytoplasm. The catalysed reaction is [ThiI sulfur-carrier protein]-S-sulfanyl-L-cysteine + a uridine in tRNA + 2 reduced [2Fe-2S]-[ferredoxin] + ATP + H(+) = [ThiI sulfur-carrier protein]-L-cysteine + a 4-thiouridine in tRNA + 2 oxidized [2Fe-2S]-[ferredoxin] + AMP + diphosphate. The enzyme catalyses [ThiS sulfur-carrier protein]-C-terminal Gly-Gly-AMP + S-sulfanyl-L-cysteinyl-[cysteine desulfurase] + AH2 = [ThiS sulfur-carrier protein]-C-terminal-Gly-aminoethanethioate + L-cysteinyl-[cysteine desulfurase] + A + AMP + 2 H(+). It functions in the pathway cofactor biosynthesis; thiamine diphosphate biosynthesis. In terms of biological role, catalyzes the ATP-dependent transfer of a sulfur to tRNA to produce 4-thiouridine in position 8 of tRNAs, which functions as a near-UV photosensor. Also catalyzes the transfer of sulfur to the sulfur carrier protein ThiS, forming ThiS-thiocarboxylate. This is a step in the synthesis of thiazole, in the thiamine biosynthesis pathway. The sulfur is donated as persulfide by IscS. This Malacoplasma penetrans (strain HF-2) (Mycoplasma penetrans) protein is Probable tRNA sulfurtransferase.